A 362-amino-acid polypeptide reads, in one-letter code: Histidinol-phosphate aminotransferase (362 aa).

K211 bears the N6-(pyridoxal phosphate)lysine mark.

It belongs to the class-II pyridoxal-phosphate-dependent aminotransferase family. Histidinol-phosphate aminotransferase subfamily. In terms of assembly, homodimer. The cofactor is pyridoxal 5'-phosphate.

The enzyme catalyses L-histidinol phosphate + 2-oxoglutarate = 3-(imidazol-4-yl)-2-oxopropyl phosphate + L-glutamate. Its pathway is amino-acid biosynthesis; L-histidine biosynthesis; L-histidine from 5-phospho-alpha-D-ribose 1-diphosphate: step 7/9. In Serratia proteamaculans (strain 568), this protein is Histidinol-phosphate aminotransferase.